The chain runs to 464 residues: tRNA(Ile2) 2-agmatinylcytidine synthetase TiaS (464 aa).

It belongs to the TiaS family.

The protein localises to the cytoplasm. It carries out the reaction cytidine(34) in tRNA(Ile2) + agmatine + ATP + H2O = 2-agmatinylcytidine(34) in tRNA(Ile2) + AMP + 2 phosphate + 2 H(+). In terms of biological role, ATP-dependent agmatine transferase that catalyzes the formation of 2-agmatinylcytidine (agm2C) at the wobble position (C34) of tRNA(Ile2), converting the codon specificity from AUG to AUA. This is tRNA(Ile2) 2-agmatinylcytidine synthetase TiaS from Ignisphaera aggregans (strain DSM 17230 / JCM 13409 / AQ1.S1).